Here is a 166-residue protein sequence, read N- to C-terminus: 2-C-methyl-D-erythritol 2,4-cyclodiphosphate synthase (166 aa).

Residues Asp-11 and His-13 each contribute to the a divalent metal cation site. 4-CDP-2-C-methyl-D-erythritol 2-phosphate contacts are provided by residues 11 to 13 (DVH) and 40 to 41 (HS). A divalent metal cation is bound at residue His-48. 4-CDP-2-C-methyl-D-erythritol 2-phosphate is bound by residues 62-64 (DLG), 135-138 (TTSD), Phe-142, and Arg-145.

Belongs to the IspF family. In terms of assembly, homotrimer. Requires a divalent metal cation as cofactor.

The enzyme catalyses 4-CDP-2-C-methyl-D-erythritol 2-phosphate = 2-C-methyl-D-erythritol 2,4-cyclic diphosphate + CMP. Its pathway is isoprenoid biosynthesis; isopentenyl diphosphate biosynthesis via DXP pathway; isopentenyl diphosphate from 1-deoxy-D-xylulose 5-phosphate: step 4/6. Involved in the biosynthesis of isopentenyl diphosphate (IPP) and dimethylallyl diphosphate (DMAPP), two major building blocks of isoprenoid compounds. Catalyzes the conversion of 4-diphosphocytidyl-2-C-methyl-D-erythritol 2-phosphate (CDP-ME2P) to 2-C-methyl-D-erythritol 2,4-cyclodiphosphate (ME-CPP) with a corresponding release of cytidine 5-monophosphate (CMP). In Pseudarthrobacter chlorophenolicus (strain ATCC 700700 / DSM 12829 / CIP 107037 / JCM 12360 / KCTC 9906 / NCIMB 13794 / A6) (Arthrobacter chlorophenolicus), this protein is 2-C-methyl-D-erythritol 2,4-cyclodiphosphate synthase.